The chain runs to 444 residues: Inward rectifier potassium channel 4 (444 aa).

At 1-55 (MHGHNRNGQAHVPRRKRRNRFVKKNGQCNVYFANLSNKSQRYMADIFTTCVDTRW) the chain is on the cytoplasmic side. Residues 56–80 (RYMLMLFSAAFLVSWLFFGLLFWCI) traverse the membrane as a helical segment. Topologically, residues 81-119 (AFFHGDLEASPSVPAAGAPGGNGGAAPAAPKPCIMHVNG) are extracellular. The helical; Pore-forming intramembrane region spans 120-131 (FLGAFLFSVETQ). The pore-forming intramembrane region spans 132-138 (TTIGYGF). Residues 133–138 (TIGYGF) carry the Selectivity filter motif. Residues 139–147 (RCVTEECPL) are Extracellular-facing. A helical membrane pass occupies residues 148-169 (AVIAVVVQSIVGCVIDSFMIGT). Over 170 to 444 (IMAKMARPKK…NISYRRESAI (275 aa)) the chain is Cytoplasmic. The short motif at 442–444 (SAI) is the PDZ-binding element.

The protein belongs to the inward rectifier-type potassium channel (TC 1.A.2.1) family. KCNJ4 subfamily. As to quaternary structure, homomultimeric and heteromultimeric association with KCNJ2 and KCNJ12. Interacts with DLG2 and DLG4. Associates, via its PDZ-recognition domain, with a complex containing LIN7A, LIN7B, LIN7C, DLG1, CASK and APBA1. Interacts with TAX1BP3. TAX1BP3 competes with LIN7 family members for KCNJ4 binding.

The protein localises to the cell membrane. Its subcellular location is the postsynaptic cell membrane. The protein resides in the cytoplasmic vesicle membrane. The catalysed reaction is K(+)(in) = K(+)(out). In terms of biological role, inward rectifier potassium channels are characterized by a greater tendency to allow potassium to flow into the cell rather than out of it. Their voltage dependence is regulated by the concentration of extracellular potassium; as external potassium is raised, the voltage range of the channel opening shifts to more positive voltages. The inward rectification is mainly due to the blockage of outward current by internal magnesium. Can be blocked by extracellular barium and cesium. This chain is Inward rectifier potassium channel 4 (KCNJ4), found in Mesocricetus auratus (Golden hamster).